The following is a 184-amino-acid chain: GTP-dependent dephospho-CoA kinase (184 aa).

GTP contacts are provided by aspartate 33, valine 34, aspartate 52, lysine 54, and glutamate 103.

The protein belongs to the GTP-dependent DPCK family.

The catalysed reaction is 3'-dephospho-CoA + GTP = GDP + CoA + H(+). Its pathway is cofactor biosynthesis; coenzyme A biosynthesis. Catalyzes the GTP-dependent phosphorylation of the 3'-hydroxyl group of dephosphocoenzyme A to form coenzyme A (CoA). The chain is GTP-dependent dephospho-CoA kinase from Ignicoccus hospitalis (strain KIN4/I / DSM 18386 / JCM 14125).